The sequence spans 120 residues: Immunoglobulin kappa variable 2D-29 (120 aa).

The first 20 residues, 1–20 (MRLPAQLLGLLMLWIPGSSA), serve as a signal peptide directing secretion. The interval 21–43 (DIVMTQTPLSLSVTPGQPASISC) is framework-1. The 100-residue stretch at 21 to 120 (DIVMTQTPLS…YYCMQSIQLP (100 aa)) folds into the Ig-like domain. C43 and C113 form a disulfide bridge. Residues 44–59 (KSSQSLLHSDGKTYLY) form a complementarity-determining-1 region. The segment at 60 to 74 (WYLQKPGQPPQLLIY) is framework-2. Residues 75 to 81 (EVSNRFS) are complementarity-determining-2. The framework-3 stretch occupies residues 82 to 113 (GVPDRFSGSGSGTDFTLKISRVEAEDVGVYYC). The tract at residues 114–120 (MQSIQLP) is complementarity-determining-3.

Immunoglobulins are composed of two identical heavy chains and two identical light chains; disulfide-linked.

The protein resides in the secreted. It localises to the cell membrane. In terms of biological role, v region of the variable domain of immunoglobulin light chains that participates in the antigen recognition. Immunoglobulins, also known as antibodies, are membrane-bound or secreted glycoproteins produced by B lymphocytes. In the recognition phase of humoral immunity, the membrane-bound immunoglobulins serve as receptors which, upon binding of a specific antigen, trigger the clonal expansion and differentiation of B lymphocytes into immunoglobulins-secreting plasma cells. Secreted immunoglobulins mediate the effector phase of humoral immunity, which results in the elimination of bound antigens. The antigen binding site is formed by the variable domain of one heavy chain, together with that of its associated light chain. Thus, each immunoglobulin has two antigen binding sites with remarkable affinity for a particular antigen. The variable domains are assembled by a process called V-(D)-J rearrangement and can then be subjected to somatic hypermutations which, after exposure to antigen and selection, allow affinity maturation for a particular antigen. This Homo sapiens (Human) protein is Immunoglobulin kappa variable 2D-29.